The following is a 228-amino-acid chain: FtsZ-localized protein A (228 aa).

One can recognise a GST N-terminal domain in the interval 3–85; that stretch reads VERTLHHFPL…HIEETETEPP (83 aa). The GST C-terminal domain occupies 90 to 223; it reads DPAERAEARR…WPGLAPAAHY (134 aa).

Belongs to the GST superfamily. Homodimer. Interacts with FtsZ filaments. Probably interacts with the GTPase domain of FtsZ.

The protein resides in the cytoplasm. Essential cell division protein that must bind to FtsZ for division to occur. Critical coordinator of envelope constriction through its interaction with FtsZ. Promotes the formation of highly curved FtsZ filaments, reduces the GTPase activity of FtsZ and stabilizes FtsZ polymers. May regulate FtsZ function by modulating its superstructure. Does not bind to glutathione. The protein is FtsZ-localized protein A of Caulobacter vibrioides (strain NA1000 / CB15N) (Caulobacter crescentus).